Consider the following 1427-residue polypeptide: DNA-directed RNA polymerase subunit beta' (1427 aa).

Positions 70, 72, 85, and 88 each coordinate Zn(2+). Positions 461, 463, and 465 each coordinate Mg(2+). The Zn(2+) site is built by Cys838, Cys912, Cys919, and Cys922.

It belongs to the RNA polymerase beta' chain family. As to quaternary structure, the RNAP catalytic core consists of 2 alpha, 1 beta, 1 beta' and 1 omega subunit. When a sigma factor is associated with the core the holoenzyme is formed, which can initiate transcription. Mg(2+) serves as cofactor. Requires Zn(2+) as cofactor.

It carries out the reaction RNA(n) + a ribonucleoside 5'-triphosphate = RNA(n+1) + diphosphate. In terms of biological role, DNA-dependent RNA polymerase catalyzes the transcription of DNA into RNA using the four ribonucleoside triphosphates as substrates. The chain is DNA-directed RNA polymerase subunit beta' from Sorangium cellulosum (strain So ce56) (Polyangium cellulosum (strain So ce56)).